A 769-amino-acid polypeptide reads, in one-letter code: Serine protease HtrA-like (769 aa).

A compositionally biased stretch (basic residues) spans methionine 1–glutamate 20. Residues methionine 1–alanine 390 are disordered. Composition is skewed to basic and acidic residues over residues phenylalanine 21–lysine 64 and leucine 71–lysine 108. Residues tyrosine 126–lysine 137 show a composition bias toward polar residues. Residues serine 138 to serine 186 show a composition bias toward basic and acidic residues. Residues glutamine 247–serine 262 show a composition bias toward polar residues. 2 stretches are compositionally biased toward basic and acidic residues: residues glutamine 264–aspartate 296 and lysine 310–asparagine 330. The segment covering alanine 331–histidine 347 has biased composition (polar residues). Positions arginine 348–asparagine 364 are enriched in basic and acidic residues. Residues glycine 365 to alanine 390 show a composition bias toward polar residues. Residues leucine 410–valine 430 traverse the membrane as a helical segment. Residues histidine 504, aspartate 534, and serine 619 each act as charge relay system in the active site. Positions isoleucine 680–aspartate 733 constitute a PDZ domain.

Belongs to the peptidase S1C family.

It localises to the cell membrane. The polypeptide is Serine protease HtrA-like (Staphylococcus aureus (strain USA300)).